A 422-amino-acid chain; its full sequence is uncharacterized protein (422 aa).

This sequence belongs to the asfivirus K421R family.

The protein localises to the virion. This is an uncharacterized protein from Ornithodoros (relapsing fever ticks).